The primary structure comprises 144 residues: Large ribosomal subunit protein uL15 (144 aa).

Polar residues predominate over residues 1 to 12 (MRLNTLSPSLGS). A disordered region spans residues 1–51 (MRLNTLSPSLGSRKNHKRLGRGIGSGFGKTAGRGHKGQKSRSGGHVNRGFE). Positions 21–31 (RGIGSGFGKTA) are enriched in gly residues.

Belongs to the universal ribosomal protein uL15 family. As to quaternary structure, part of the 50S ribosomal subunit.

Binds to the 23S rRNA. This chain is Large ribosomal subunit protein uL15, found in Buchnera aphidicola subsp. Schizaphis graminum (strain Sg).